The sequence spans 400 residues: Homoserine O-acetyltransferase (400 aa).

The segment covering 1–11 has biased composition (polar residues); sequence MVKVQSIQSQA. A disordered region spans residues 1-24; the sequence is MVKVQSIQSQAVHAEERAHEADHP. Residues 13–23 are compositionally biased toward basic and acidic residues; sequence HAEERAHEADH. Residues 64–373 enclose the AB hydrolase-1 domain; the sequence is NAILVCHALT…TDRGHDAFLL (310 aa). Ser-169 serves as the catalytic Nucleophile. Arg-239 contributes to the substrate binding site. Catalysis depends on residues Asp-335 and His-368. Position 369 (Asp-369) interacts with substrate.

The protein belongs to the AB hydrolase superfamily. MetX family. Homodimer.

The protein resides in the cytoplasm. The enzyme catalyses L-homoserine + acetyl-CoA = O-acetyl-L-homoserine + CoA. It participates in amino-acid biosynthesis; L-methionine biosynthesis via de novo pathway; O-acetyl-L-homoserine from L-homoserine: step 1/1. Transfers an acetyl group from acetyl-CoA to L-homoserine, forming acetyl-L-homoserine. The chain is Homoserine O-acetyltransferase from Rhodopseudomonas palustris (strain BisB18).